Consider the following 277-residue polypeptide: Protein CMSS1 (277 aa).

The segment covering 1 to 14 (MADDLGNEWWEEPA) has biased composition (acidic residues). Positions 1–91 (MADDLGNEWW…QHAPTAGTPE (91 aa)) are disordered. The span at 24–34 (EEVKESEESKG) shows a compositional bias: basic and acidic residues. Residues 35 to 52 (NKKKKIPSGKTQVKRKKE) show a composition bias toward basic residues. The segment covering 53–66 (VKVSQEAEKEDSAP) has biased composition (basic and acidic residues).

Belongs to the CMS1 family.

The protein is Protein CMSS1 (cmss1) of Xenopus laevis (African clawed frog).